Here is a 386-residue protein sequence, read N- to C-terminus: Succinate--CoA ligase [ADP-forming] subunit beta (386 aa).

The ATP-grasp domain maps to 9-244; sequence KEILRNFGVP…LDEEDPAEVE (236 aa). Residues Lys-46, 53-55, Glu-99, Ala-102, and Glu-107 each bind ATP; that span reads GRG. 2 residues coordinate Mg(2+): Asn-199 and Asp-213. Substrate is bound by residues Asn-264 and 321–323; that span reads GIM.

The protein belongs to the succinate/malate CoA ligase beta subunit family. As to quaternary structure, heterotetramer of two alpha and two beta subunits. It depends on Mg(2+) as a cofactor.

The enzyme catalyses succinate + ATP + CoA = succinyl-CoA + ADP + phosphate. It carries out the reaction GTP + succinate + CoA = succinyl-CoA + GDP + phosphate. The protein operates within carbohydrate metabolism; tricarboxylic acid cycle; succinate from succinyl-CoA (ligase route): step 1/1. In terms of biological role, succinyl-CoA synthetase functions in the citric acid cycle (TCA), coupling the hydrolysis of succinyl-CoA to the synthesis of either ATP or GTP and thus represents the only step of substrate-level phosphorylation in the TCA. The beta subunit provides nucleotide specificity of the enzyme and binds the substrate succinate, while the binding sites for coenzyme A and phosphate are found in the alpha subunit. The polypeptide is Succinate--CoA ligase [ADP-forming] subunit beta (Polaromonas sp. (strain JS666 / ATCC BAA-500)).